Consider the following 414-residue polypeptide: DNA primase large subunit PriL (414 aa).

The [4Fe-4S] cluster site is built by C251, C352, C370, and C376.

It belongs to the eukaryotic-type primase large subunit family. Heterodimer of a small subunit (PriS) and a large subunit (PriL). [4Fe-4S] cluster serves as cofactor.

Regulatory subunit of DNA primase, an RNA polymerase that catalyzes the synthesis of short RNA molecules used as primers for DNA polymerase during DNA replication. Stabilizes and modulates the activity of the small subunit, increasing the rate of DNA synthesis, and conferring RNA synthesis capability. The DNA polymerase activity may enable DNA primase to also catalyze primer extension after primer synthesis. May also play a role in DNA repair. The protein is DNA primase large subunit PriL of Methanocaldococcus jannaschii (strain ATCC 43067 / DSM 2661 / JAL-1 / JCM 10045 / NBRC 100440) (Methanococcus jannaschii).